Reading from the N-terminus, the 1356-residue chain is Fibronectin type III domain containing protein 3C1 (1356 aa).

Disordered regions lie at residues 303-341, 356-402, and 428-452; these read PRNM…SDNN, TYDE…SDVA, and NQKK…QPGC. Positions 308 to 341 are enriched in low complexity; it reads DNIPDTNTTDTITSSSAHTPSISTSNATFCSDNN. A compositionally biased stretch (polar residues) spans 370–393; sequence PSCTSQSASNPSVSENAHNPSSIN. Over residues 439–448 the composition is skewed to basic and acidic residues; sequence LKEHNTEDRT. 4 consecutive Fibronectin type-III domains span residues 454 to 549, 553 to 648, 650 to 741, and 745 to 842; these read NIEK…TPGC, PPLA…TPPA, LPPK…TRPA, and CPNK…TLPP. Over residues 825 to 838 the composition is skewed to polar residues; that stretch reads GQSRPSDVLTIQTP. The tract at residues 825-894 is disordered; the sequence is GQSRPSDVLT…QDRKVHPSSE (70 aa). A compositionally biased stretch (basic and acidic residues) spans 883–894; that stretch reads PHQDRKVHPSSE. 4 Fibronectin type-III domains span residues 914–1007, 1017–1103, 1104–1199, and 1202–1299; these read PPSQ…TPGT, EVES…TKPL, PPEP…TKSP, and ALKA…TYKH. Positions 1299-1320 are disordered; sequence HHSGHGKGSGSKGKGNHNDKGE. Residues 1330-1350 form a helical membrane-spanning segment; it reads TFVLTLLIGFALIAVLCAVAV. At 1351-1356 the chain is on the cytoplasmic side; the sequence is QYLLIN.

It belongs to the FNDC3 family.

It localises to the membrane. In Mus musculus (Mouse), this protein is Fibronectin type III domain containing protein 3C1 (Fndc3c1).